We begin with the raw amino-acid sequence, 444 residues long: Squalene synthase ERG9 (444 aa).

The chain crosses the membrane as a helical span at residues 421–441 (FNMVLSIILSVLLGFYYIYTL).

The protein belongs to the phytoene/squalene synthase family. Mg(2+) serves as cofactor.

It localises to the endoplasmic reticulum membrane. It is found in the microsome. It carries out the reaction 2 (2E,6E)-farnesyl diphosphate + NADPH + H(+) = squalene + 2 diphosphate + NADP(+). The enzyme catalyses 2 (2E,6E)-farnesyl diphosphate + NADH + H(+) = squalene + 2 diphosphate + NAD(+). It participates in terpene metabolism; lanosterol biosynthesis; lanosterol from farnesyl diphosphate: step 1/3. Squalene synthase; part of the third module of ergosterol biosynthesis pathway that includes the late steps of the pathway. ERG9 produces squalene from 2 farnesyl pyrophosphate moieties. The third module or late pathway involves the ergosterol synthesis itself through consecutive reactions that mainly occur in the endoplasmic reticulum (ER) membrane. Firstly, the squalene synthase ERG9 catalyzes the condensation of 2 farnesyl pyrophosphate moieties to form squalene, which is the precursor of all steroids. Squalene synthase is crucial for balancing the incorporation of farnesyl diphosphate (FPP) into sterol and nonsterol isoprene synthesis. Secondly, the squalene epoxidase ERG1 catalyzes the stereospecific oxidation of squalene to (S)-2,3-epoxysqualene, which is considered to be a rate-limiting enzyme in steroid biosynthesis. Then, the lanosterol synthase ERG7 catalyzes the cyclization of (S)-2,3 oxidosqualene to lanosterol, a reaction that forms the sterol core. In the next steps, lanosterol is transformed to zymosterol through a complex process involving various demethylation, reduction and desaturation reactions. The lanosterol 14-alpha-demethylase ERG11 (also known as CYP51) catalyzes C14-demethylation of lanosterol to produce 4,4'-dimethyl cholesta-8,14,24-triene-3-beta-ol, which is critical for ergosterol biosynthesis. The C-14 reductase ERG24 reduces the C14=C15 double bond of 4,4-dimethyl-cholesta-8,14,24-trienol to produce 4,4-dimethyl-cholesta-8,24-dienol. 4,4-dimethyl-cholesta-8,24-dienol is substrate of the C-4 demethylation complex ERG25-ERG26-ERG27 in which ERG25 catalyzes the three-step monooxygenation required for the demethylation of 4,4-dimethyl and 4alpha-methylsterols, ERG26 catalyzes the oxidative decarboxylation that results in a reduction of the 3-beta-hydroxy group at the C-3 carbon to an oxo group, and ERG27 is responsible for the reduction of the keto group on the C-3. ERG28 has a role as a scaffold to help anchor ERG25, ERG26 and ERG27 to the endoplasmic reticulum and ERG29 regulates the activity of the iron-containing C4-methylsterol oxidase ERG25. Then, the sterol 24-C-methyltransferase ERG6 catalyzes the methyl transfer from S-adenosyl-methionine to the C-24 of zymosterol to form fecosterol. The C-8 sterol isomerase ERG2 catalyzes the reaction which results in unsaturation at C-7 in the B ring of sterols and thus converts fecosterol to episterol. The sterol-C5-desaturase ERG3 then catalyzes the introduction of a C-5 double bond in the B ring to produce 5-dehydroepisterol. The C-22 sterol desaturase ERG5 further converts 5-dehydroepisterol into ergosta-5,7,22,24(28)-tetraen-3beta-ol by forming the C-22(23) double bond in the sterol side chain. Finally, ergosta-5,7,22,24(28)-tetraen-3beta-ol is substrate of the C-24(28) sterol reductase ERG4 to produce ergosterol. The protein is Squalene synthase ERG9 of Saccharomyces cerevisiae (strain ATCC 204508 / S288c) (Baker's yeast).